We begin with the raw amino-acid sequence, 545 residues long: CTP synthase (545 aa).

Residues 1–266 (MTHFIFVTGG…DDLICERFGF (266 aa)) form an amidoligase domain region. S13 provides a ligand contact to CTP. UTP is bound at residue S13. Residues 14-19 (SLGKGI) and D71 each bind ATP. Mg(2+) is bound by residues D71 and E140. CTP contacts are provided by residues 147-149 (DIE), 187-192 (KTKPTQ), and K223. UTP contacts are provided by residues 187-192 (KTKPTQ) and K223. 239–241 (KDA) contributes to the ATP binding site. The Glutamine amidotransferase type-1 domain occupies 292 to 543 (RVAMVGKYVE…IDAAKTQHQK (252 aa)). An L-glutamine-binding site is contributed by G353. C380 (nucleophile; for glutamine hydrolysis) is an active-site residue. L-glutamine contacts are provided by residues 381-384 (LGMQ), E404, and R471. Catalysis depends on residues H516 and E518.

It belongs to the CTP synthase family. Homotetramer.

The enzyme catalyses UTP + L-glutamine + ATP + H2O = CTP + L-glutamate + ADP + phosphate + 2 H(+). It catalyses the reaction L-glutamine + H2O = L-glutamate + NH4(+). The catalysed reaction is UTP + NH4(+) + ATP = CTP + ADP + phosphate + 2 H(+). Its pathway is pyrimidine metabolism; CTP biosynthesis via de novo pathway; CTP from UDP: step 2/2. Its activity is regulated as follows. Allosterically activated by GTP, when glutamine is the substrate; GTP has no effect on the reaction when ammonia is the substrate. The allosteric effector GTP functions by stabilizing the protein conformation that binds the tetrahedral intermediate(s) formed during glutamine hydrolysis. Inhibited by the product CTP, via allosteric rather than competitive inhibition. Functionally, catalyzes the ATP-dependent amination of UTP to CTP with either L-glutamine or ammonia as the source of nitrogen. Regulates intracellular CTP levels through interactions with the four ribonucleotide triphosphates. This Acinetobacter baumannii (strain AB307-0294) protein is CTP synthase.